The primary structure comprises 452 residues: Putrescine hydroxycinnamoyltransferase (452 aa).

The active-site Proton acceptor is His151. The tract at residues Pro213 to Glu234 is disordered. A compositionally biased stretch (basic and acidic residues) spans Gly222–Glu234. The Proton acceptor role is filled by Asp398.

It belongs to the plant acyltransferase family. In terms of tissue distribution, highly expressed in roots. Expressed at low levels in flowers.

In terms of biological role, hydroxycinnamoyl transferase that catalyzes the transfer of an acyl from p-coumaryol-CoA to putrescine, to produce coumaroyl putrescine. Can use feruloyl-CoA, caffeoyl-CoA and sinapoyl-CoA as acyl donors. Seems to be able to transfer the acyl group from feruloyl-CoA to the acyl acceptors agmatine and spermidine. The chain is Putrescine hydroxycinnamoyltransferase from Oryza sativa subsp. japonica (Rice).